The chain runs to 296 residues: uncharacterized protein (296 aa).

The helical transmembrane segment at 7–26 (CFSLVCALGASTYLLWRGWL) threads the bilayer.

The protein localises to the membrane. This is an uncharacterized protein from Treponema pallidum (strain Nichols).